The primary structure comprises 104 residues: MILTTTNTIEGHTITAYKGIVVGEAIMGANIVRDFFASVTDVIGGRSGAYEDKLQDARTEAMAEIEERAAALGANAVVGIDLDYEVTGDSMLMVSVSGTAVTIT.

It belongs to the UPF0145 family.

The protein is UPF0145 protein RD1_2695 of Roseobacter denitrificans (strain ATCC 33942 / OCh 114) (Erythrobacter sp. (strain OCh 114)).